We begin with the raw amino-acid sequence, 241 residues long: Methylthioribulose-1-phosphate dehydratase (241 aa).

The tract at residues M1 to E20 is disordered. Substrate is bound at residue C100. Zn(2+) is bound by residues H117 and H119. Residue E146 is the Proton donor/acceptor of the active site. Residue H202 participates in Zn(2+) binding.

It belongs to the aldolase class II family. MtnB subfamily. Requires Zn(2+) as cofactor.

It localises to the cytoplasm. It catalyses the reaction 5-(methylsulfanyl)-D-ribulose 1-phosphate = 5-methylsulfanyl-2,3-dioxopentyl phosphate + H2O. It participates in amino-acid biosynthesis; L-methionine biosynthesis via salvage pathway; L-methionine from S-methyl-5-thio-alpha-D-ribose 1-phosphate: step 2/6. Its function is as follows. Catalyzes the dehydration of methylthioribulose-1-phosphate (MTRu-1-P) into 2,3-diketo-5-methylthiopentyl-1-phosphate (DK-MTP-1-P). The sequence is that of Methylthioribulose-1-phosphate dehydratase from Blastomyces gilchristii (strain SLH14081) (Blastomyces dermatitidis).